The following is a 413-amino-acid chain: 3-isopropylmalate dehydratase large subunit (413 aa).

Residues cysteine 295, cysteine 353, and cysteine 356 each contribute to the [4Fe-4S] cluster site.

Belongs to the aconitase/IPM isomerase family. LeuC type 2 subfamily. Heterodimer of LeuC and LeuD. [4Fe-4S] cluster is required as a cofactor.

It carries out the reaction (2R,3S)-3-isopropylmalate = (2S)-2-isopropylmalate. It participates in amino-acid biosynthesis; L-leucine biosynthesis; L-leucine from 3-methyl-2-oxobutanoate: step 2/4. Catalyzes the isomerization between 2-isopropylmalate and 3-isopropylmalate, via the formation of 2-isopropylmaleate. This chain is 3-isopropylmalate dehydratase large subunit, found in Pyrobaculum calidifontis (strain DSM 21063 / JCM 11548 / VA1).